The following is a 139-amino-acid chain: ATP synthase epsilon chain (139 aa).

Belongs to the ATPase epsilon chain family. In terms of assembly, F-type ATPases have 2 components, CF(1) - the catalytic core - and CF(0) - the membrane proton channel. CF(1) has five subunits: alpha(3), beta(3), gamma(1), delta(1), epsilon(1). CF(0) has three main subunits: a, b and c.

The protein resides in the cell inner membrane. In terms of biological role, produces ATP from ADP in the presence of a proton gradient across the membrane. This Escherichia coli O157:H7 protein is ATP synthase epsilon chain (atpC).